Here is a 1527-residue protein sequence, read N- to C-terminus: ATP-binding cassette sub-family C member 3 (1527 aa).

Topologically, residues 1-32 (MDALCGSGELGSKFWDSNLSVHTENPDLTPCF) are extracellular. Asn18 carries an N-linked (GlcNAc...) asparagine glycan. A helical transmembrane segment spans residues 33 to 53 (QNSLLAWVPCIYLWVALPCYL). The Cytoplasmic portion of the chain corresponds to 54-73 (LYLRHHCRGYIILSHLSKLK). The chain crosses the membrane as a helical span at residues 74–94 (MVLGVLLWCVSWADLFYSFHG). At 95–99 (LVHGR) the chain is on the extracellular side. Residues 100 to 120 (APAPVFFVTPLVVGVTMLLAT) traverse the membrane as a helical segment. Residues 121–132 (LLIQYERLQGVQ) are Cytoplasmic-facing. Residues 133–153 (SSGVLIIFWFLCVVCAIVPFR) form a helical membrane-spanning segment. Residues 154–171 (SKILLAKAEGEISDPFRF) are Extracellular-facing. Residues 172 to 192 (TTFYIHFALVLSALILACFRE) form a helical membrane-spanning segment. At 193 to 302 (KPPFFSAKNV…RPRKPSFLKA (110 aa)) the chain is on the cytoplasmic side. Residues 303–323 (LLATFGSSFLISACFKLIQDL) traverse the membrane as a helical segment. Residues 311–594 (FLISACFKLI…LPQLISNLTQ (284 aa)) enclose the ABC transmembrane type-1 1 domain. Over 324-349 (LSFINPQLLSILIRFISNPMAPSWWG) the chain is Extracellular. The chain crosses the membrane as a helical span at residues 350 to 370 (FLVAGLMFLCSMMQSLILQHY). Residues 371–426 (YHYIFVTGVKFRTGIMGVIYRKALVITNSVKRASTVGEIVNLMSVDAQRFMDLAPF) are Cytoplasmic-facing. A helical membrane pass occupies residues 427–447 (LNLLWSAPLQIILAIYFLWQN). The Extracellular segment spans residues 448 to 450 (LGP). The chain crosses the membrane as a helical span at residues 451–471 (SVLAGVAFMVLLIPLNGAVAV). The Cytoplasmic portion of the chain corresponds to 472 to 533 (KMRAFQVKQM…LLRTAAYLHT (62 aa)). A helical membrane pass occupies residues 534 to 554 (TTTFTWMCSPFLVTLITLWVY). At 555–576 (VYVDPNNVLDAEKAFVSVSLFN) the chain is on the extracellular side. Residues 577–597 (ILRLPLNMLPQLISNLTQASV) traverse the membrane as a helical segment. Over 598–963 (SLKRIQQFLS…VELSVFWDYA (366 aa)) the chain is Cytoplasmic. The ABC transporter 1 domain maps to 629 to 851 (IHSGTFTWAQ…NGSFANFLCN (223 aa)). 661-668 (GPVGCGKS) contacts ATP. Ser908 and Ser911 each carry phosphoserine. The segment at 910–932 (LSSDGEGQGRPVPRRHLGPSEKV) is disordered. Residues 964–984 (KAVGLCTTLAICLLYVGQSAA) form a helical membrane-spanning segment. The ABC transmembrane type-1 2 domain occupies 971–1252 (TLAICLLYVG…MIRMMSDLES (282 aa)). At 985–1021 (AIGANVWLSAWTNDAMADSRQNNTSLRLGVYAALGIL) the chain is on the extracellular side. N-linked (GlcNAc...) asparagine glycosylation is found at Asn1006 and Asn1007. Residues 1022–1042 (QGFLVMLAAMAMAAGGIQAAR) form a helical membrane-spanning segment. At 1043 to 1085 (VLHQALLHNKIRSPQSFFDTTPSGRILNCFSKDIYVVDEVLAP) the chain is on the cytoplasmic side. A helical transmembrane segment spans residues 1086–1106 (VILMLLNSFFNAISTLVVIMA). Ser1107 is a topological domain (extracellular). The helical transmembrane segment at 1108-1128 (TPLFTVVILPLAVLYTLVQRF) threads the bilayer. Over 1129–1199 (YAATSRQLKR…ISNRWLSIGV (71 aa)) the chain is Cytoplasmic. A helical transmembrane segment spans residues 1200 to 1220 (EFVGNCVVLFAALFAVIGRSS). Topologically, residues 1221 to 1222 (LN) are extracellular. The chain crosses the membrane as a helical span at residues 1223–1243 (PGLVGLSVSYSLQVTFALNWM). Residues 1244–1527 (IRMMSDLESN…YGMARDAGLA (284 aa)) lie on the Cytoplasmic side of the membrane. Positions 1291-1523 (FRNYSVRYRP…RGIFYGMARD (233 aa)) constitute an ABC transporter 2 domain. Residue 1323-1330 (GRTGAGKS) coordinates ATP.

The protein belongs to the ABC transporter superfamily. ABCC family. Conjugate transporter (TC 3.A.1.208) subfamily. As to expression, mainly expressed in the liver. Also expressed in small intestine, colon, prostate, testis, brain and at a lower level in the kidney. In testis, localized to peritubular myoid cells, Leydig cells, along the basal membrane of Sertoli cells and moderately in the adluminal compartment of the seminiferous tubules.

It is found in the basolateral cell membrane. It localises to the basal cell membrane. The enzyme catalyses taurocholate(in) + ATP + H2O = taurocholate(out) + ADP + phosphate + H(+). It catalyses the reaction glycocholate(in) + ATP + H2O = glycocholate(out) + ADP + phosphate + H(+). The catalysed reaction is taurolithocholate 3-sulfate(in) + ATP + H2O = taurolithocholate 3-sulfate(out) + ADP + phosphate + H(+). It carries out the reaction taurochenodeoxycholate 3-sulfate(in) + ATP + H2O = taurochenodeoxycholate 3-sulfate(out) + ADP + phosphate + H(+). The enzyme catalyses an S-substituted glutathione(in) + ATP + H2O = an S-substituted glutathione(out) + ADP + phosphate + H(+). It catalyses the reaction ATP + H2O + xenobioticSide 1 = ADP + phosphate + xenobioticSide 2.. The catalysed reaction is 17beta-estradiol 17-O-(beta-D-glucuronate)(in) + ATP + H2O = 17beta-estradiol 17-O-(beta-D-glucuronate)(out) + ADP + phosphate + H(+). It carries out the reaction dehydroepiandrosterone 3-sulfate(in) + ATP + H2O = dehydroepiandrosterone 3-sulfate(out) + ADP + phosphate + H(+). The enzyme catalyses leukotriene C4(in) + ATP + H2O = leukotriene C4(out) + ADP + phosphate + H(+). It catalyses the reaction (4Z,15Z)-bilirubin IXalpha C8-beta-D-glucuronoside(in) + ATP + H2O = (4Z,15Z)-bilirubin IXalpha C8-beta-D-glucuronoside(out) + ADP + phosphate + H(+). The catalysed reaction is (4Z,15Z)-bilirubin IXalpha C8,C12-beta-D-bisglucuronoside(in) + ATP + H2O = (4Z,15Z)-bilirubin IXalpha C8,C12-beta-D-bisglucuronoside(out) + ADP + phosphate + H(+). Functionally, ATP-dependent transporter of the ATP-binding cassette (ABC) family that binds and hydrolyzes ATP to enable active transport of various substrates including many drugs, toxicants and endogenous compound across cell membranes. Transports glucuronide conjugates such as bilirubin diglucuronide, estradiol-17-beta-o-glucuronide and GSH conjugates such as leukotriene C4 (LTC4). Transports also various bile salts (taurocholate, glycocholate, taurochenodeoxycholate-3-sulfate, taurolithocholate- 3-sulfate). Does not contribute substantially to bile salt physiology but provides an alternative route for the export of bile acids and glucuronides from cholestatic hepatocytes. May contribute to regulate the transport of organic compounds in testes across the blood-testis-barrier. Can confer resistance to various anticancer drugs, methotrexate, tenoposide and etoposide, by decreasing accumulation of these drugs in cells. The chain is ATP-binding cassette sub-family C member 3 from Homo sapiens (Human).